The sequence spans 355 residues: Proto-oncogene Wnt-3 (355 aa).

A signal peptide spans 1–21 (MEPHLLGLLLGLLLGGTRVLA). Cystine bridges form between cysteine 80-cysteine 91, cysteine 131-cysteine 139, cysteine 141-cysteine 158, cysteine 206-cysteine 220, cysteine 208-cysteine 215, cysteine 284-cysteine 315, cysteine 300-cysteine 310, cysteine 314-cysteine 354, cysteine 330-cysteine 345, cysteine 332-cysteine 342, and cysteine 337-cysteine 338. Asparagine 90 carries N-linked (GlcNAc...) asparagine glycosylation. Serine 212 is lipidated: O-palmitoleoyl serine; by PORCN. The N-linked (GlcNAc...) asparagine glycan is linked to asparagine 301.

This sequence belongs to the Wnt family. Forms a soluble 1:1 complex with AFM; this prevents oligomerization and is required for prolonged biological activity. The complex with AFM may represent the physiological form in body fluids. Interacts with PORCN. Interacts with WLS. Palmitoleoylation is required for efficient binding to frizzled receptors. Depalmitoleoylation leads to Wnt signaling pathway inhibition.

The protein resides in the secreted. The protein localises to the extracellular space. Its subcellular location is the extracellular matrix. Its function is as follows. Ligand for members of the frizzled family of seven transmembrane receptors. Functions in the canonical Wnt signaling pathway that results in activation of transcription factors of the TCF/LEF family. Required for normal gastrulation, formation of the primitive streak, and for the formation of the mesoderm during early embryogenesis. Required for normal formation of the apical ectodermal ridge. Required for normal embryonic development, and especially for limb development. This is Proto-oncogene Wnt-3 (WNT3) from Homo sapiens (Human).